The primary structure comprises 440 residues: Chromosomal replication initiator protein DnaA (440 aa).

The segment at 1–69 is domain I, interacts with DnaA modulators; it reads MKERILQEIK…VKVVLGNDAT (69 aa). Residues 69 to 96 form a domain II region; the sequence is TFEITYEAFEPHSSYSEPLVKKRAVLLT. Residues 97-313 are domain III, AAA+ region; the sequence is PLNPDYTFEN…GAIIKLLVYK (217 aa). Positions 108, 113, 140, 141, 142, 143, 144, 145, and 300 each coordinate ADP. ATP is bound at residue Gly-140. Residues Gly-142, Lys-143, and Thr-144 each contribute to the ATP site. Thr-144 contributes to the Mg(2+) binding site. The segment at 314 to 440 is domain IV, binds dsDNA; it reads ETTGKEVDLK…GEISRRALSG (127 aa).

Belongs to the DnaA family. As to quaternary structure, oligomerizes as a right-handed, spiral filament on DNA at oriC.

It is found in the cytoplasm. In terms of biological role, plays an essential role in the initiation and regulation of chromosomal replication. ATP-DnaA binds to the origin of replication (oriC) to initiate formation of the DNA replication initiation complex once per cell cycle. Binds the DnaA box (a 9 base pair repeat at the origin) and separates the double-stranded (ds)DNA. Forms a right-handed helical filament on oriC DNA; dsDNA binds to the exterior of the filament while single-stranded (ss)DNA is stabiized in the filament's interior. The ATP-DnaA-oriC complex binds and stabilizes one strand of the AT-rich DNA unwinding element (DUE), permitting loading of DNA polymerase. After initiation quickly degrades to an ADP-DnaA complex that is not apt for DNA replication. Binds acidic phospholipids. Its function is as follows. The DnaA box consensus is 5'-[ATC][AT]AC[CT]TACCA[CT][CTA]-3' in this bacterium. Mutagenesis of residues that line the central pore blocks dsDNA separation. In Thermotoga maritima (strain ATCC 43589 / DSM 3109 / JCM 10099 / NBRC 100826 / MSB8), this protein is Chromosomal replication initiator protein DnaA.